Reading from the N-terminus, the 220-residue chain is Deoxyribose-phosphate aldolase 2 (220 aa).

Residue aspartate 89 is the Proton donor/acceptor of the active site. The Schiff-base intermediate with acetaldehyde role is filled by lysine 151. Lysine 180 serves as the catalytic Proton donor/acceptor.

It belongs to the DeoC/FbaB aldolase family. DeoC type 1 subfamily.

The protein resides in the cytoplasm. It catalyses the reaction 2-deoxy-D-ribose 5-phosphate = D-glyceraldehyde 3-phosphate + acetaldehyde. It participates in carbohydrate degradation; 2-deoxy-D-ribose 1-phosphate degradation; D-glyceraldehyde 3-phosphate and acetaldehyde from 2-deoxy-alpha-D-ribose 1-phosphate: step 2/2. Catalyzes a reversible aldol reaction between acetaldehyde and D-glyceraldehyde 3-phosphate to generate 2-deoxy-D-ribose 5-phosphate. The protein is Deoxyribose-phosphate aldolase 2 of Staphylococcus aureus (strain N315).